We begin with the raw amino-acid sequence, 46 residues long: Large ribosomal subunit protein bL36B (46 aa).

The protein belongs to the bacterial ribosomal protein bL36 family.

This is Large ribosomal subunit protein bL36B from Cronobacter sakazakii (strain ATCC BAA-894) (Enterobacter sakazakii).